A 575-amino-acid chain; its full sequence is Proline--tRNA ligase (575 aa).

The protein belongs to the class-II aminoacyl-tRNA synthetase family. ProS type 1 subfamily. Homodimer.

It localises to the cytoplasm. The catalysed reaction is tRNA(Pro) + L-proline + ATP = L-prolyl-tRNA(Pro) + AMP + diphosphate. Functionally, catalyzes the attachment of proline to tRNA(Pro) in a two-step reaction: proline is first activated by ATP to form Pro-AMP and then transferred to the acceptor end of tRNA(Pro). As ProRS can inadvertently accommodate and process non-cognate amino acids such as alanine and cysteine, to avoid such errors it has two additional distinct editing activities against alanine. One activity is designated as 'pretransfer' editing and involves the tRNA(Pro)-independent hydrolysis of activated Ala-AMP. The other activity is designated 'posttransfer' editing and involves deacylation of mischarged Ala-tRNA(Pro). The misacylated Cys-tRNA(Pro) is not edited by ProRS. This Pseudothermotoga lettingae (strain ATCC BAA-301 / DSM 14385 / NBRC 107922 / TMO) (Thermotoga lettingae) protein is Proline--tRNA ligase.